The following is a 294-amino-acid chain: tRNA dimethylallyltransferase (294 aa).

10 to 17 serves as a coordination point for ATP; sequence GPTAVGKT. A substrate-binding site is contributed by 12-17; sequence TAVGKT. An interaction with substrate tRNA region spans residues 35-38; sequence DSQQ.

Belongs to the IPP transferase family. As to quaternary structure, monomer. It depends on Mg(2+) as a cofactor.

It carries out the reaction adenosine(37) in tRNA + dimethylallyl diphosphate = N(6)-dimethylallyladenosine(37) in tRNA + diphosphate. In terms of biological role, catalyzes the transfer of a dimethylallyl group onto the adenine at position 37 in tRNAs that read codons beginning with uridine, leading to the formation of N6-(dimethylallyl)adenosine (i(6)A). This chain is tRNA dimethylallyltransferase, found in Streptococcus pneumoniae serotype 2 (strain D39 / NCTC 7466).